The following is a 308-amino-acid chain: Glutaminase (308 aa).

Substrate contacts are provided by Ser-66, Asn-117, Glu-162, Asn-169, Tyr-193, Tyr-244, and Val-262.

The protein belongs to the glutaminase family. In terms of assembly, homotetramer.

It carries out the reaction L-glutamine + H2O = L-glutamate + NH4(+). In Natranaerobius thermophilus (strain ATCC BAA-1301 / DSM 18059 / JW/NM-WN-LF), this protein is Glutaminase.